Here is a 444-residue protein sequence, read N- to C-terminus: Sprouty-related, EVH1 domain-containing protein 1 (444 aa).

N-acetylserine is present on Ser2. One can recognise a WH1 domain in the interval 6–123 (ATSDNDNSYA…RGIRRAIEDI (118 aa)). The residue at position 225 (Lys225) is an N6-methyllysine. The KBD domain occupies 234-286 (SIRHVSFQDEDEIVRINPRDILIRRYADYRHPDMWKNDLERDDTDSSVPFSKQ). Ser239 bears the Phosphoserine mark. The disordered stretch occupies residues 268–287 (WKNDLERDDTDSSVPFSKQD). Ser309 carries the phosphoserine modification. A required for interaction with TESK1 region spans residues 333–444 (SRCVYCQERF…CCGGKHKAAG (112 aa)). The 109-residue stretch at 334 to 442 (RCVYCQERFN…CGCCGGKHKA (109 aa)) folds into the SPR domain.

As to quaternary structure, homodimer and heterodimer. Able to interact with SPRED2 to form heterodimers. Interacts (via C-terminus) with TAOK1/MARKK (via C-terminus); the interaction does not affect TAOK1 kinase activity. Interacts (via C-terminus) with TESK1 (via C-terminus); the interaction inhibits TESK1 kinase activity. Interacts with CAV1. Interacts with RAS. Interacts with palmitoyltransferase ZDHHC17/HIP14; the interaction leads to palmitoylation of SPRED1. Palmitoylated by ZDHHC17/HIP14. In terms of processing, ubiquitinated. Post-translationally, phosphorylated on tyrosine. As to expression, expressed in brain. Weakly expressed in lung, heart, liver, kidney, intestine, spleen, testis, thymus, colon and ovary. Also expressed in embryonic tissues such as heart, lung, liver and brain. Highly expressed in IL3-dependent hematopoietic cell lines (Ba/F3 and MC/9) and bone marrow-derived mast cells (BMMC).

It localises to the cell membrane. Its subcellular location is the membrane. The protein localises to the caveola. It is found in the nucleus. In terms of biological role, tyrosine kinase substrate that inhibits growth-factor-mediated activation of MAP kinase. Negatively regulates hematopoiesis of bone marrow. Inhibits fibroblast growth factor (FGF)-induced retinal lens fiber differentiation, probably by inhibiting FGF-mediated phosphorylation of ERK1/2. Attenuates actin stress fiber formation via inhibition of TESK1-mediated phosphorylation of cofilin. Inhibits TGFB-induced epithelial-to-mesenchymal transition in lens epithelial cells. The chain is Sprouty-related, EVH1 domain-containing protein 1 (Spred1) from Mus musculus (Mouse).